A 179-amino-acid polypeptide reads, in one-letter code: Peptidyl-prolyl cis-trans isomerase A (179 aa).

The PPIase cyclophilin-type domain occupies 15-178; sequence FFDITIGGVE…KPVVIANCGQ (164 aa).

It belongs to the cyclophilin-type PPIase family.

It localises to the cytoplasm. The protein resides in the cytosol. It carries out the reaction [protein]-peptidylproline (omega=180) = [protein]-peptidylproline (omega=0). Binds cyclosporin A (CsA). CsA mediates some of its effects via an inhibitory action on PPIase. Its function is as follows. PPIase that catalyzes the cis-trans isomerization of proline imidic peptide bonds in oligopeptides and may therefore assist protein folding. This is Peptidyl-prolyl cis-trans isomerase A (ppiA) from Dictyostelium discoideum (Social amoeba).